The sequence spans 1150 residues: Cohesin subunit SCC3 (1150 aa).

Residues 1-12 (MTAVRRSTRIRT) show a composition bias toward basic residues. Residues 1–122 (MTAVRRSTRI…PAYHRSKKDQ (122 aa)) are disordered. Ser28 is modified (phosphoserine). Positions 32-43 (VESDKITAKTQH) are enriched in basic and acidic residues. Positions 44-72 (EEEEEQDTGESEESSSEDDYEDQDDDDYV) are enriched in acidic residues. A compositionally biased stretch (basic residues) spans 77–87 (AKRKSRKRKPK). The stretch at 305-349 (LTQQAVNLEKNYLAKLSKQLSLEEKKKRPNNKTLEKLESTIAETQ) forms a coiled coil. One can recognise an SCD domain in the interval 367-457 (FVHRYKDVSD…ERFKTKILEV (91 aa)). Phosphoserine is present on Ser628. Residues 1065–1150 (ENPEPNKKNI…IDNSDEITQD (86 aa)) are disordered. Residues 1083-1101 (QREKAPLQPNSERETDHAN) show a composition bias toward basic and acidic residues.

Belongs to the SCC3 family. Interacts directly with MCD1 in cohesin complex. Cohesin complexes are composed of the SMC1 and SMC3 heterodimer attached via their hinge domain, MCD1 which link them, and IRR1/SCC3, which interacts with MCD1. The cohesin complex also interacts with SCC2, which is required for its association with chromosomes. Interacts with LIN1. Post-translationally, acetylated by ECO1.

The protein localises to the nucleus. It is found in the chromosome. Its subcellular location is the centromere. Functionally, component of cohesin complex, a complex required for the cohesion of sister chromatids after DNA replication. The cohesin complex apparently forms a large proteinaceous ring within which sister chromatids can be trapped. At anaphase, the MCD1/SCC1 subunit of the complex is cleaved and dissociates from chromatin, allowing sister chromatids to segregate. The cohesin complex may also play a role in spindle pole assembly during mitosis. The protein is Cohesin subunit SCC3 (IRR1) of Saccharomyces cerevisiae (strain ATCC 204508 / S288c) (Baker's yeast).